The chain runs to 256 residues: Triosephosphate isomerase (256 aa).

12-14 (NWK) lines the substrate pocket. Residue His-99 is the Electrophile of the active site. Glu-171 functions as the Proton acceptor in the catalytic mechanism. Residues Gly-177, Ser-217, and 238–239 (GG) each bind substrate.

Belongs to the triosephosphate isomerase family. In terms of assembly, homodimer.

It localises to the cytoplasm. The enzyme catalyses D-glyceraldehyde 3-phosphate = dihydroxyacetone phosphate. The protein operates within carbohydrate biosynthesis; gluconeogenesis. It participates in carbohydrate degradation; glycolysis; D-glyceraldehyde 3-phosphate from glycerone phosphate: step 1/1. In terms of biological role, involved in the gluconeogenesis. Catalyzes stereospecifically the conversion of dihydroxyacetone phosphate (DHAP) to D-glyceraldehyde-3-phosphate (G3P). The sequence is that of Triosephosphate isomerase from Rubrobacter xylanophilus (strain DSM 9941 / JCM 11954 / NBRC 16129 / PRD-1).